Here is a 301-residue protein sequence, read N- to C-terminus: uncharacterized protein (301 aa).

This sequence belongs to the asfivirus E301R family. As to quaternary structure, interacts with host IRF3.

Functionally, plays a role in the inhibition of host innate immune system by acting as a negatively regulator of type I interferon production. Mechanistically, interacts with and prevents host IRF3 nuclear localization to inhibit its transcriptional activity. This is an uncharacterized protein from African swine fever virus (strain Badajoz 1971 Vero-adapted) (Ba71V).